Reading from the N-terminus, the 519-residue chain is T-complex protein 1 subunit gamma (519 aa).

The protein belongs to the TCP-1 chaperonin family. As to quaternary structure, component of the T-complex protein 1 (TCP1) complex.

Its subcellular location is the cytoplasm. Functionally, molecular chaperone; assists the folding of proteins upon ATP hydrolysis. This chain is T-complex protein 1 subunit gamma (CCT3), found in Encephalitozoon cuniculi (strain GB-M1) (Microsporidian parasite).